A 259-amino-acid chain; its full sequence is Tryptophan synthase alpha chain (259 aa).

Catalysis depends on proton acceptor residues glutamate 35 and aspartate 46.

This sequence belongs to the TrpA family. In terms of assembly, tetramer of two alpha and two beta chains.

It catalyses the reaction (1S,2R)-1-C-(indol-3-yl)glycerol 3-phosphate + L-serine = D-glyceraldehyde 3-phosphate + L-tryptophan + H2O. It participates in amino-acid biosynthesis; L-tryptophan biosynthesis; L-tryptophan from chorismate: step 5/5. The alpha subunit is responsible for the aldol cleavage of indoleglycerol phosphate to indole and glyceraldehyde 3-phosphate. In Methanococcus maripaludis (strain C7 / ATCC BAA-1331), this protein is Tryptophan synthase alpha chain.